A 544-amino-acid polypeptide reads, in one-letter code: Chaperonin GroEL 3 (544 aa).

ATP contacts are provided by residues 30 to 33, Lys51, 87 to 91, Gly415, and Asp496; these read TLGP and DGTTT.

It belongs to the chaperonin (HSP60) family. Forms a cylinder of 14 subunits composed of two heptameric rings stacked back-to-back. Interacts with the co-chaperonin GroES.

Its subcellular location is the cytoplasm. It catalyses the reaction ATP + H2O + a folded polypeptide = ADP + phosphate + an unfolded polypeptide.. In terms of biological role, together with its co-chaperonin GroES, plays an essential role in assisting protein folding. The GroEL-GroES system forms a nano-cage that allows encapsulation of the non-native substrate proteins and provides a physical environment optimized to promote and accelerate protein folding. The sequence is that of Chaperonin GroEL 3 from Rhizobium etli (strain ATCC 51251 / DSM 11541 / JCM 21823 / NBRC 15573 / CFN 42).